We begin with the raw amino-acid sequence, 36 residues long: DFPLSKEYETCVRPRKCQPPLKCNKAQICVDPKKGW.

Cystine bridges form between C11-C23 and C17-C29.

In terms of tissue distribution, expressed by the venom gland.

It localises to the secreted. In terms of biological role, affects the activity of both ryanodine-sensitive calcium-release channels RyR1 and RyR2 with high potency. At lower concentrations the toxin increases full openings of the RyRs, and at higher concentrations it inhibits full openings and induce openings to subconductance levels and reduces the number of full conductance openings. The different actions may be attributed to the toxins binding at different sites on the RyRs, with binding at a high-affinity site mediating the increase in full openings and the induction of subconductance states evoked upon binding to a lower-affinity site. Shows insect lethality against crickets and common cutworms (only shows paralysis against cockroaches), but no toxicity is observed in mice. This Liocheles australasiae (Dwarf wood scorpion) protein is Insecticidal toxin LaIT1.